We begin with the raw amino-acid sequence, 391 residues long: Cilia- and flagella-associated protein 263 (391 aa).

The interval 1 to 21 is disordered; sequence MTDDDSETSASETQAQEESDL. 2 coiled-coil regions span residues 95–243 and 294–369; these read LSVD…NQEL and LRKE…LKGY.

This sequence belongs to the CFAP263 family. As to quaternary structure, forms a complex with CFAP184; the interaction is required for functional activity in cilia. Interacts with HAP1 and PCM1.

Its subcellular location is the cytoplasm. The protein localises to the cytoskeleton. It is found in the microtubule organizing center. The protein resides in the centrosome. It localises to the centriolar satellite. Its subcellular location is the cell projection. The protein localises to the cilium. Functionally, component of centriolar satellites contributing to primary cilium formation. In complex with CFAP263, acts as a regulator of ciliary beating that connects radial spoke 3 (RS3) to the inner dynein arm (IDA) and the nexin-dynein regulatory complex (N-DRC). The complex is positioned parallel to N-DRC and forms a connection between the arch at the base of RS3, the IDA tail and N-DRC. The sequence is that of Cilia- and flagella-associated protein 263 (CFAP263) from Bos taurus (Bovine).